The following is a 396-amino-acid chain: Ribosomal RNA small subunit methyltransferase H (396 aa).

S-adenosyl-L-methionine is bound by residues 101–103 (GGH), aspartate 120, tyrosine 147, aspartate 171, and glutamine 178.

Belongs to the methyltransferase superfamily. RsmH family.

Its subcellular location is the cytoplasm. The enzyme catalyses cytidine(1402) in 16S rRNA + S-adenosyl-L-methionine = N(4)-methylcytidine(1402) in 16S rRNA + S-adenosyl-L-homocysteine + H(+). Functionally, specifically methylates the N4 position of cytidine in position 1402 (C1402) of 16S rRNA. In Mycobacterium bovis (strain ATCC BAA-935 / AF2122/97), this protein is Ribosomal RNA small subunit methyltransferase H.